Reading from the N-terminus, the 215-residue chain is Adenylate kinase (215 aa).

An ATP-binding site is contributed by 10–15 (GCGKGT). The NMP stretch occupies residues 30–59 (STGDIFRQTIDQKGPYWEELKSYISKGLLV). AMP is bound by residues threonine 31, arginine 36, 57–59 (LLV), and glutamine 91. The segment at 120-157 (GRRICSKCKRIYNIHYSAPKKEDICDDDGEFLIQRKDD) is LID. Arginine 121 lines the ATP pocket. Zn(2+)-binding residues include cysteine 124 and cysteine 127. 130–131 (IY) is an ATP binding site. The Zn(2+) site is built by cysteine 144 and aspartate 147. AMP contacts are provided by arginine 154 and arginine 165.

This sequence belongs to the adenylate kinase family. Monomer.

The protein resides in the cytoplasm. The enzyme catalyses AMP + ATP = 2 ADP. It functions in the pathway purine metabolism; AMP biosynthesis via salvage pathway; AMP from ADP: step 1/1. Its function is as follows. Catalyzes the reversible transfer of the terminal phosphate group between ATP and AMP. Plays an important role in cellular energy homeostasis and in adenine nucleotide metabolism. This Malacoplasma penetrans (strain HF-2) (Mycoplasma penetrans) protein is Adenylate kinase.